The following is a 293-amino-acid chain: Ethanolamine ammonia-lyase small subunit (293 aa).

Adenosylcob(III)alamin is bound by residues valine 207 and glutamate 228.

This sequence belongs to the EutC family. As to quaternary structure, the basic unit is a heterodimer which dimerizes to form tetramers. The heterotetramers trimerize; 6 large subunits form a core ring with 6 small subunits projecting outwards. Adenosylcob(III)alamin serves as cofactor.

The protein resides in the bacterial microcompartment. It catalyses the reaction ethanolamine = acetaldehyde + NH4(+). Its pathway is amine and polyamine degradation; ethanolamine degradation. Catalyzes the deamination of various vicinal amino-alcohols to oxo compounds. Allows this organism to utilize ethanolamine as the sole source of nitrogen and carbon in the presence of external vitamin B12. The chain is Ethanolamine ammonia-lyase small subunit from Listeria monocytogenes serovar 1/2a (strain ATCC BAA-679 / EGD-e).